Consider the following 278-residue polypeptide: Energy-coupling factor transporter ATP-binding protein EcfA (278 aa).

The ABC transporter domain maps to 4-239 (LETRDLKYSY…SETVRSANLR (236 aa)). An ATP-binding site is contributed by 37-44 (GPNGAGKS).

This sequence belongs to the ABC transporter superfamily. Energy-coupling factor EcfA family. In terms of assembly, forms a stable energy-coupling factor (ECF) transporter complex composed of 2 membrane-embedded substrate-binding proteins (S component), 2 ATP-binding proteins (A component) and 2 transmembrane proteins (T component).

The protein localises to the cell membrane. ATP-binding (A) component of a common energy-coupling factor (ECF) ABC-transporter complex. Unlike classic ABC transporters this ECF transporter provides the energy necessary to transport a number of different substrates. This chain is Energy-coupling factor transporter ATP-binding protein EcfA, found in Methanococcus maripaludis (strain DSM 14266 / JCM 13030 / NBRC 101832 / S2 / LL).